The primary structure comprises 324 residues: Ribosomal RNA small subunit methyltransferase H (324 aa).

S-adenosyl-L-methionine-binding positions include 41 to 43, Asp-60, Tyr-87, Asp-111, and Gln-118; that span reads GGH.

The protein belongs to the methyltransferase superfamily. RsmH family.

It is found in the cytoplasm. The enzyme catalyses cytidine(1402) in 16S rRNA + S-adenosyl-L-methionine = N(4)-methylcytidine(1402) in 16S rRNA + S-adenosyl-L-homocysteine + H(+). Its function is as follows. Specifically methylates the N4 position of cytidine in position 1402 (C1402) of 16S rRNA. The sequence is that of Ribosomal RNA small subunit methyltransferase H from Nocardia farcinica (strain IFM 10152).